Reading from the N-terminus, the 267-residue chain is Cyclin-C (267 aa).

A Cyclin N-terminal domain is found at I48 to I151.

It belongs to the cyclin family. Cyclin C subfamily. As to quaternary structure, component of the Cdk8 module of the Mediator complex, composed of CycC, Cdk8, kto and skd.

The protein resides in the nucleus. Functionally, component of the Mediator complex, a coactivator involved in regulated gene transcription of nearly all RNA polymerase II-dependent genes. Mediator functions as a bridge to convey information from gene-specific regulatory proteins to the basal RNA polymerase II transcription machinery. Mediator is recruited to promoters by direct interactions with regulatory proteins and serves as a scaffold for the assembly of a functional preinitiation complex with RNA polymerase II and the general transcription factors. Binds to and activates cyclin-dependent kinase Cdk8 that phosphorylates the CTD (C-terminal domain) of the large subunit of RNA polymerase II (RNAp II), which may inhibit the formation of a transcription initiation complex. Required for leg and eye development and macrochaete specification or differentiation. In Drosophila melanogaster (Fruit fly), this protein is Cyclin-C (CycC).